Consider the following 354-residue polypeptide: S-adenosylmethionine:tRNA ribosyltransferase-isomerase (354 aa).

Belongs to the QueA family. Monomer.

The protein resides in the cytoplasm. The enzyme catalyses 7-aminomethyl-7-carbaguanosine(34) in tRNA + S-adenosyl-L-methionine = epoxyqueuosine(34) in tRNA + adenine + L-methionine + 2 H(+). The protein operates within tRNA modification; tRNA-queuosine biosynthesis. In terms of biological role, transfers and isomerizes the ribose moiety from AdoMet to the 7-aminomethyl group of 7-deazaguanine (preQ1-tRNA) to give epoxyqueuosine (oQ-tRNA). In Pseudomonas fluorescens (strain ATCC BAA-477 / NRRL B-23932 / Pf-5), this protein is S-adenosylmethionine:tRNA ribosyltransferase-isomerase.